A 436-amino-acid chain; its full sequence is Glutamyl-tRNA reductase (436 aa).

Residues 49 to 52 (TCNR), serine 118, 123 to 125 (EPQ), and glutamine 129 each bind substrate. The active-site Nucleophile is cysteine 50. 203 to 208 (GAGETI) contributes to the NADP(+) binding site.

Belongs to the glutamyl-tRNA reductase family. In terms of assembly, homodimer.

It carries out the reaction (S)-4-amino-5-oxopentanoate + tRNA(Glu) + NADP(+) = L-glutamyl-tRNA(Glu) + NADPH + H(+). Its pathway is porphyrin-containing compound metabolism; protoporphyrin-IX biosynthesis; 5-aminolevulinate from L-glutamyl-tRNA(Glu): step 1/2. Catalyzes the NADPH-dependent reduction of glutamyl-tRNA(Glu) to glutamate 1-semialdehyde (GSA). This chain is Glutamyl-tRNA reductase, found in Actinobacillus pleuropneumoniae serotype 7 (strain AP76).